A 58-amino-acid chain; its full sequence is Putative calcium channel toxin 196 (58 aa).

Positions 1-16 (GSLLLVLFLLSVICYA) are cleaved as a signal peptide. Positions 17 to 26 (EIAAGPTKCQ) are excised as a propeptide. 3 disulfide bridges follow: C25-C38, C31-C43, and C37-C52.

The protein belongs to the scorpion calcin-like family. KTX subfamily. As to expression, expressed by the venom gland.

The protein localises to the secreted. Its function is as follows. May inhibit voltage-gated potassium channels Kv1.1/KCNA1, hKv1.2/KCNA2, and Kv1.3/KCNA3. May also increase intracellular calcium release through the activation of nuclear inositol 1,4,5-trisphosphate receptors (ITPR) of cardiomyocytes, thereby causing an increase in the contraction frequency of these cells. In Lychas mucronatus (Chinese swimming scorpion), this protein is Putative calcium channel toxin 196.